A 118-amino-acid polypeptide reads, in one-letter code: Hydrogenase maturation factor HypA (118 aa).

His2 serves as a coordination point for Ni(2+). 4 residues coordinate Zn(2+): Cys73, Cys76, Cys89, and Cys92.

Belongs to the HypA/HybF family.

Functionally, involved in the maturation of [NiFe] hydrogenases. Required for nickel insertion into the metal center of the hydrogenase. In Shewanella oneidensis (strain ATCC 700550 / JCM 31522 / CIP 106686 / LMG 19005 / NCIMB 14063 / MR-1), this protein is Hydrogenase maturation factor HypA.